The primary structure comprises 534 residues: Flavonoid-6-hydroxylase (534 aa).

The helical transmembrane segment at 3–23 (FISFVYTLIAFSSLLYFYLIW) threads the bilayer. Position 467 (C467) interacts with heme.

This sequence belongs to the cytochrome P450 family. Requires heme as cofactor. As to expression, expressed in leaves.

The protein resides in the membrane. The enzyme catalyses genkwanin + reduced [NADPH--hemoprotein reductase] + O2 = scutellarein 7-methyl ether + oxidized [NADPH--hemoprotein reductase] + H2O. It carries out the reaction (2S)-sakuranetin + reduced [NADPH--hemoprotein reductase] + O2 = (2S)-7-methylcarthamidin + oxidized [NADPH--hemoprotein reductase] + H2O + H(+). The catalysed reaction is apigenin 4',7-dimethyl ether + reduced [NADPH--hemoprotein reductase] + O2 = ladanein + oxidized [NADPH--hemoprotein reductase] + H2O + H(+). It catalyses the reaction (2S)-naringenin 4',7-dimethyl ether + reduced [NADPH--hemoprotein reductase] + O2 = (2S)-carthamidin-4',7-dimethyl ether + oxidized [NADPH--hemoprotein reductase] + H2O + H(+). It functions in the pathway flavonoid metabolism. Hydroxylase involved in the biosynthesis of polymethoxylated flavonoids natural products such as nevadensin and salvigenin, aroma compounds which contribute to the flavor of sweet basil, and exhibit pharmacological activities such as anti-allergic, anti-oxidant, antibacterial, anti-proliferative, and anti-inflammatory effects. Catalyzes the 6-hydroxylation of 7-O-methylated precursors such as the conversion of genkwanin (GENK) to scutellarein-7-methyl ether (SCU7Me). Can also use, with a lower efficiency, apigenin-7,4'-dimethyl ether (AdM), naringenin-7-methyl ether (SAK) and naringenin-7,4'-dimethyl ether (NdM) as substrates. The protein is Flavonoid-6-hydroxylase of Ocimum basilicum (Sweet basil).